A 497-amino-acid polypeptide reads, in one-letter code: ADP-dependent glucokinase (497 aa).

Residues 1 to 22 form the signal peptide; it reads MALWRGSAYAGFLALAVGCVFL. The 446-residue stretch at 52-497 folds into the ADPK domain; it reads SPEGRLAAAW…LFYSEVHPHY (446 aa). Residues E297, E328, and D481 each contribute to the Mg(2+) site. D481 acts as the Proton acceptor in catalysis.

It belongs to the ADP-dependent glucokinase family. In terms of assembly, monomer. Mg(2+) is required as a cofactor.

Its subcellular location is the secreted. It carries out the reaction D-glucose + ADP = D-glucose 6-phosphate + AMP + H(+). It functions in the pathway carbohydrate degradation; glycolysis. In terms of biological role, catalyzes the phosphorylation of D-glucose to D-glucose 6-phosphate using ADP as the phosphate donor. GDP and CDP can replace ADP, but with reduced efficiency. In Homo sapiens (Human), this protein is ADP-dependent glucokinase (ADPGK).